A 506-amino-acid chain; its full sequence is Lysine--tRNA ligase (506 aa).

Mg(2+) contacts are provided by Glu416 and Glu423.

Belongs to the class-II aminoacyl-tRNA synthetase family. Homodimer. It depends on Mg(2+) as a cofactor.

Its subcellular location is the cytoplasm. The enzyme catalyses tRNA(Lys) + L-lysine + ATP = L-lysyl-tRNA(Lys) + AMP + diphosphate. In Bordetella bronchiseptica (strain ATCC BAA-588 / NCTC 13252 / RB50) (Alcaligenes bronchisepticus), this protein is Lysine--tRNA ligase.